A 303-amino-acid polypeptide reads, in one-letter code: Geranylgeranyl pyrophosphate synthase (303 aa).

Isopentenyl diphosphate-binding residues include Lys30, Arg33, and His62. Residues Asp69 and Asp73 each coordinate Mg(2+). Arg78 is a binding site for dimethylallyl diphosphate. Position 79 (Arg79) interacts with isopentenyl diphosphate. Dimethylallyl diphosphate-binding residues include Lys156, Thr157, Gln190, Lys207, and Lys217.

It belongs to the FPP/GGPP synthase family. Mg(2+) is required as a cofactor.

It is found in the cytoplasm. It carries out the reaction isopentenyl diphosphate + dimethylallyl diphosphate = (2E)-geranyl diphosphate + diphosphate. The catalysed reaction is isopentenyl diphosphate + (2E)-geranyl diphosphate = (2E,6E)-farnesyl diphosphate + diphosphate. The enzyme catalyses isopentenyl diphosphate + (2E,6E)-farnesyl diphosphate = (2E,6E,10E)-geranylgeranyl diphosphate + diphosphate. It participates in isoprenoid biosynthesis; farnesyl diphosphate biosynthesis; farnesyl diphosphate from geranyl diphosphate and isopentenyl diphosphate: step 1/1. It functions in the pathway isoprenoid biosynthesis; geranyl diphosphate biosynthesis; geranyl diphosphate from dimethylallyl diphosphate and isopentenyl diphosphate: step 1/1. Its pathway is isoprenoid biosynthesis; geranylgeranyl diphosphate biosynthesis; geranylgeranyl diphosphate from farnesyl diphosphate and isopentenyl diphosphate: step 1/1. In terms of biological role, catalyzes the trans-addition of the three molecules of IPP onto DMAPP to form geranylgeranyl pyrophosphate. The chain is Geranylgeranyl pyrophosphate synthase from Mucor circinelloides f. lusitanicus (Mucor racemosus var. lusitanicus).